The chain runs to 883 residues: DNA double-strand break repair Rad50 ATPase (883 aa).

Residues Arg12, 32-38 (NGSGKSS), and Gln134 contribute to the ATP site. A coiled-coil region spans residues 218-420 (ELRGELGGLE…EIGSRRGELK (203 aa)). Positions 395–492 (IQKARERKEE…ELVEVEKTLK (98 aa)) constitute a Zinc-hook domain. Cys440 and Cys443 together coordinate Zn(2+). Coiled-coil stretches lie at residues 452 to 585 (RKEL…KKLG) and 620 to 741 (EDLL…LLKE). 790-795 (FLSGGE) is a binding site for ATP.

It belongs to the SMC family. RAD50 subfamily. In terms of assembly, homodimer. Forms a heterotetramer composed of two Mre11 subunits and two Rad50 subunits. The cofactor is Zn(2+).

In terms of biological role, part of the Rad50/Mre11 complex, which is involved in the early steps of DNA double-strand break (DSB) repair. The complex may facilitate opening of the processed DNA ends to aid in the recruitment of HerA and NurA. Rad50 controls the balance between DNA end bridging and DNA resection via ATP-dependent structural rearrangements of the Rad50/Mre11 complex. In Thermococcus kodakarensis (strain ATCC BAA-918 / JCM 12380 / KOD1) (Pyrococcus kodakaraensis (strain KOD1)), this protein is DNA double-strand break repair Rad50 ATPase.